The primary structure comprises 585 residues: MIRGVVDADVCLFAASTLLLLRGIIQARDAFAGLANDSIVSIALMMMIAAGLESSGALEFVPELVLGRSKREWVGQLRMHIAVASVSAVMNNTPLVAVMIPVVESWCRNNNHHPSRFMMPLSYSAILGGLCTIIGTSTNLIARGLAQQDDPKLKLPFVEVGIIGLPLTVAGGIYVVLFSPLLLRKRDTMMAAVVADPREYVVSVRVDARFAHIGRTIESAGLRHLRGLFLADLQRQDGATVPSPPPTTIILQGDKLTFAGDIQGMQHILSLPGLTPISSADLAADLEETVAGSPSSDRIMVEAVVSLSSPICNMTIRDSHFRSRYGAVVLRVHRNGERIAGGLGDIVVKGGDTMLLEAGPDFLQKYKHSTEWALAVDAFRVTLPRRDPLALFMSLGIFIALIVLNSMDVLPLSTTALVCLFAYLITGVLTVSQCRAAIPSSILLTVAGGFGVAKAMTVTGLAHRLAGSLLNVFSWMGRAGPVAAIYASTSLLTALLSNGAAVTLMYPIARDLAKQAGVSIKGPLYALMIGASSDFSTPIGYQTNLMVSGPGGYRFLDFTRFGLPLQFVAALITVPICVLYFEPRT.

5 helical membrane-spanning segments follow: residues 5-25 (VVDA…RGII), 30-50 (AFAG…MIAA), 83-103 (VASV…IPVV), 117-137 (FMMP…IGTS), and 162-182 (IIGL…SPLL). 2 consecutive RCK C-terminal domains span residues 189–274 (MMAA…LPGL) and 288–372 (ETVA…STEW). A run of 5 helical transmembrane segments spans residues 389-409 (LALF…SMDV), 411-431 (PLST…VLTV), 442-462 (ILLT…TGLA), 482-502 (VAAI…GAAV), and 561-581 (FGLP…VLYF).

The protein belongs to the CitM (TC 2.A.11) transporter family.

The protein resides in the membrane. Functionally, not known; mutations in SAC1 produces cells that cannot synthesize arylsulfatase and cannot take up sulfate as rapidly as wild-type cells. SAC1 is necessary for cells to survive sulfur deprivation. The polypeptide is Putative sulfur deprivation response regulator (SAC1) (Chlamydomonas reinhardtii (Chlamydomonas smithii)).